Here is a 1774-residue protein sequence, read N- to C-terminus: Receptor-mediated endocytosis protein 6 homolog (1774 aa).

In terms of domain architecture, Ras-GAP spans 157-396 (ELLLKLLREL…EDVVAILPQQ (240 aa)). Disordered regions lie at residues 444–480 (IPKQ…NNRS), 517–564 (PLAN…PAPT), 661–727 (AAHS…HHHG), 784–811 (ENTL…RNFS), 869–947 (AEID…EDSA), 983–1102 (ESSF…EEQP), 1115–1142 (QEEQ…SMEQ), and 1214–1342 (RAGA…GGRS). Composition is skewed to low complexity over residues 519–533 (ANGQ…SASN) and 540–557 (SSHS…AAPA). Over residues 674-683 (QQERDVHENE) the composition is skewed to basic and acidic residues. Over residues 688–713 (DMVSANVSGRGTPNISGRDTPSSQVT) the composition is skewed to polar residues. The segment covering 794 to 809 (RGGDRGDRGDRDRDRN) has biased composition (basic and acidic residues). The span at 887-905 (PGSGGGAGVPEAGGGGGVV) shows a compositional bias: gly residues. The span at 929–944 (DPDRERLRNGSERSQE) shows a compositional bias: basic and acidic residues. Residues 1011–1027 (MRRQTSAESSISNQSLN) show a composition bias toward polar residues. Residues 1038–1047 (LAKHHHHHQH) show a composition bias toward basic residues. Over residues 1048–1060 (RDRDRDRDRDRDH) the composition is skewed to basic and acidic residues. The span at 1061–1076 (REHHHKSAALKKKKHQ) shows a compositional bias: basic residues. The segment covering 1077 to 1087 (EHKEHQHRDLI) has biased composition (basic and acidic residues). The segment covering 1091–1101 (DCSEDKDEEEQ) has biased composition (acidic residues). The span at 1115 to 1125 (QEEQQQQQQQQ) shows a compositional bias: low complexity. Residues 1246–1291 (SADKEQQPYRDRERERDRERDRERDRDRERDRDRDRDRDRDREHHS) show a composition bias toward basic and acidic residues. Residues 1310–1335 (SSSSKNNAIAIAAPSSINPNPSPSSA) are compositionally biased toward low complexity. The stretch at 1516–1546 (RHRQQLLLRSEQLEQLEVRLRSEARSCQRCL) forms a coiled coil. In terms of domain architecture, VPS9 spans 1635-1774 (VSRDTVLSAH…KFIKTMDYLD (140 aa)).

Belongs to the GAPVD1 family.

Its subcellular location is the membrane. In terms of biological role, acts both as a GTPase-activating protein (GAP) and a guanine nucleotide exchange factor (GEF), and participates in endocytosis. The polypeptide is Receptor-mediated endocytosis protein 6 homolog (Drosophila pseudoobscura pseudoobscura (Fruit fly)).